We begin with the raw amino-acid sequence, 145 residues long: Mannitol-specific phosphotransferase enzyme IIA component (145 aa).

One can recognise a PTS EIIA type-2 domain in the interval Pro-4–Val-144. His-64 serves as the catalytic Tele-phosphohistidine intermediate. Residue His-64 is modified to Phosphohistidine; by HPr.

The protein localises to the cytoplasm. Its function is as follows. The phosphoenolpyruvate-dependent sugar phosphotransferase system (sugar PTS), a major carbohydrate active transport system, catalyzes the phosphorylation of incoming sugar substrates concomitantly with their translocation across the cell membrane. The enzyme II CmtAB PTS system is involved in D-mannitol transport. The protein is Mannitol-specific phosphotransferase enzyme IIA component of Geobacillus stearothermophilus (Bacillus stearothermophilus).